The following is a 117-amino-acid chain: Holo-[acyl-carrier-protein] synthase (117 aa).

D8 and E58 together coordinate Mg(2+).

It belongs to the P-Pant transferase superfamily. AcpS family. Requires Mg(2+) as cofactor.

It is found in the cytoplasm. It carries out the reaction apo-[ACP] + CoA = holo-[ACP] + adenosine 3',5'-bisphosphate + H(+). Its function is as follows. Transfers the 4'-phosphopantetheine moiety from coenzyme A to a Ser of acyl-carrier-protein. The chain is Holo-[acyl-carrier-protein] synthase from Shouchella clausii (strain KSM-K16) (Alkalihalobacillus clausii).